The sequence spans 107 residues: uncharacterized protein (107 aa).

A coiled-coil region spans residues 34–107 (FASKDKKDEK…SDNQKKDMSY (74 aa)).

This is an uncharacterized protein from Dictyostelium discoideum (Social amoeba).